Here is a 292-residue protein sequence, read N- to C-terminus: 33 kDa chaperonin (292 aa).

2 cysteine pairs are disulfide-bonded: Cys230/Cys232 and Cys263/Cys266.

The protein belongs to the HSP33 family. In terms of processing, under oxidizing conditions two disulfide bonds are formed involving the reactive cysteines. Under reducing conditions zinc is bound to the reactive cysteines and the protein is inactive.

It is found in the cytoplasm. Redox regulated molecular chaperone. Protects both thermally unfolding and oxidatively damaged proteins from irreversible aggregation. Plays an important role in the bacterial defense system toward oxidative stress. This is 33 kDa chaperonin from Escherichia coli O17:K52:H18 (strain UMN026 / ExPEC).